The following is a 145-amino-acid chain: Basic phospholipase A2 Vb-2 (145 aa).

The N-terminal stretch at 1 to 19 is a signal peptide; it reads MNPAHLLVLLAVCVSLLGA. Residues 20–27 constitute a propeptide that is removed on maturation; that stretch reads ANIPPQPL. Cystine bridges form between cysteine 38/cysteine 97, cysteine 52/cysteine 144, cysteine 54/cysteine 70, cysteine 69/cysteine 125, cysteine 76/cysteine 118, cysteine 86/cysteine 111, and cysteine 104/cysteine 116. Residues tyrosine 53, glycine 55, and glycine 57 each coordinate Ca(2+). Residue histidine 73 is part of the active site. Ca(2+) is bound at residue aspartate 74. Aspartate 119 is an active-site residue.

Ca(2+) serves as cofactor. As to expression, expressed by the venom gland.

Its subcellular location is the secreted. The catalysed reaction is a 1,2-diacyl-sn-glycero-3-phosphocholine + H2O = a 1-acyl-sn-glycero-3-phosphocholine + a fatty acid + H(+). In terms of biological role, snake venom phospholipase A2 (PLA2) that has only a weak enzymatic activity. Inhibits neuromuscular transmission by blocking acetylcholine release from the nerve termini. PLA2 catalyzes the calcium-dependent hydrolysis of the 2-acyl groups in 3-sn-phosphoglycerides. The protein is Basic phospholipase A2 Vb-2 of Bungarus fasciatus (Banded krait).